We begin with the raw amino-acid sequence, 432 residues long: Adenylosuccinate synthetase (432 aa).

GTP-binding positions include 13–19 (GDEGKGK) and 41–43 (GHT). Asp14 (proton acceptor) is an active-site residue. Mg(2+) is bound by residues Asp14 and Gly41. IMP-binding positions include 14–17 (DEGK), 39–42 (NAGH), Thr130, Arg144, Gln225, Thr240, and Arg304. His42 serves as the catalytic Proton donor. 300–306 (AVTGRPR) contributes to the substrate binding site. GTP-binding positions include Arg306, 332-334 (KLD), and 415-417 (STG).

The protein belongs to the adenylosuccinate synthetase family. Homodimer. Requires Mg(2+) as cofactor.

Its subcellular location is the cytoplasm. It carries out the reaction IMP + L-aspartate + GTP = N(6)-(1,2-dicarboxyethyl)-AMP + GDP + phosphate + 2 H(+). It functions in the pathway purine metabolism; AMP biosynthesis via de novo pathway; AMP from IMP: step 1/2. Plays an important role in the de novo pathway of purine nucleotide biosynthesis. Catalyzes the first committed step in the biosynthesis of AMP from IMP. This Haemophilus ducreyi (strain 35000HP / ATCC 700724) protein is Adenylosuccinate synthetase.